The primary structure comprises 310 residues: Pirin-like protein At1g50590 (310 aa).

This sequence belongs to the pirin family.

The protein localises to the nucleus. This is Pirin-like protein At1g50590 from Arabidopsis thaliana (Mouse-ear cress).